The sequence spans 264 residues: Proteasome assembly chaperone 2 (264 aa).

Position 137 is a phosphothreonine (threonine 137).

It belongs to the PSMG2 family. Forms a heterodimer with PSMG1. The PSMG1-PSMG2 heterodimer interacts directly with the PSMA5 and PSMA7 proteasome alpha subunits. Degraded by the proteasome upon completion of 20S proteasome maturation.

It localises to the nucleus. Chaperone protein which promotes assembly of the 20S proteasome as part of a heterodimer with PSMG1. The PSMG1-PSMG2 heterodimer binds to the PSMA5 and PSMA7 proteasome subunits, promotes assembly of the proteasome alpha subunits into the heteroheptameric alpha ring and prevents alpha ring dimerization. The polypeptide is Proteasome assembly chaperone 2 (Bos taurus (Bovine)).